An 81-amino-acid polypeptide reads, in one-letter code: RNA-binding protein Hfq (81 aa).

The Sm domain maps to 11–71 (DIFLNSARKN…VSTITPLRPI (61 aa)).

It belongs to the Hfq family. In terms of assembly, homohexamer.

Functionally, RNA chaperone that binds small regulatory RNA (sRNAs) and mRNAs to facilitate mRNA translational regulation in response to envelope stress, environmental stress and changes in metabolite concentrations. Also binds with high specificity to tRNAs. This Clostridium acetobutylicum (strain ATCC 824 / DSM 792 / JCM 1419 / IAM 19013 / LMG 5710 / NBRC 13948 / NRRL B-527 / VKM B-1787 / 2291 / W) protein is RNA-binding protein Hfq.